A 328-amino-acid polypeptide reads, in one-letter code: Biotin synthase (328 aa).

The Radical SAM core domain maps to 42–267; that stretch reads YHVQLASLLS…LMPGSRVRLS (226 aa). Residues Cys57, Cys61, and Cys64 each coordinate [4Fe-4S] cluster. Cys101, Cys133, Cys193, and Arg265 together coordinate [2Fe-2S] cluster.

It belongs to the radical SAM superfamily. Biotin synthase family. As to quaternary structure, homodimer. It depends on [4Fe-4S] cluster as a cofactor. [2Fe-2S] cluster serves as cofactor.

It carries out the reaction (4R,5S)-dethiobiotin + (sulfur carrier)-SH + 2 reduced [2Fe-2S]-[ferredoxin] + 2 S-adenosyl-L-methionine = (sulfur carrier)-H + biotin + 2 5'-deoxyadenosine + 2 L-methionine + 2 oxidized [2Fe-2S]-[ferredoxin]. It participates in cofactor biosynthesis; biotin biosynthesis; biotin from 7,8-diaminononanoate: step 2/2. Catalyzes the conversion of dethiobiotin (DTB) to biotin by the insertion of a sulfur atom into dethiobiotin via a radical-based mechanism. This Synechococcus sp. (strain CC9311) protein is Biotin synthase.